The sequence spans 522 residues: Light-independent protochlorophyllide reductase subunit B (522 aa).

Aspartate 36 is a binding site for [4Fe-4S] cluster. Aspartate 274 (proton donor) is an active-site residue. 409 to 410 (GL) provides a ligand contact to substrate. Positions 426-464 (DEAGPSHHGGKAVPASAPRAEATADEGSTPEEAVPPVAA) are disordered. Residues 455–464 (PEEAVPPVAA) are compositionally biased toward low complexity.

It belongs to the ChlB/BchB/BchZ family. As to quaternary structure, protochlorophyllide reductase is composed of three subunits; BchL, BchN and BchB. Forms a heterotetramer of two BchB and two BchN subunits. The cofactor is [4Fe-4S] cluster.

The enzyme catalyses chlorophyllide a + oxidized 2[4Fe-4S]-[ferredoxin] + 2 ADP + 2 phosphate = protochlorophyllide a + reduced 2[4Fe-4S]-[ferredoxin] + 2 ATP + 2 H2O. It functions in the pathway porphyrin-containing compound metabolism; bacteriochlorophyll biosynthesis (light-independent). Its function is as follows. Component of the dark-operative protochlorophyllide reductase (DPOR) that uses Mg-ATP and reduced ferredoxin to reduce ring D of protochlorophyllide (Pchlide) to form chlorophyllide a (Chlide). This reaction is light-independent. The NB-protein (BchN-BchB) is the catalytic component of the complex. The protein is Light-independent protochlorophyllide reductase subunit B of Cereibacter sphaeroides (strain ATCC 17025 / ATH 2.4.3) (Rhodobacter sphaeroides).